The chain runs to 426 residues: Serine--tRNA ligase (426 aa).

233–235 (TAE) is an L-serine binding site. 264-266 (RSE) serves as a coordination point for ATP. Glu287 contacts L-serine. Residue 351–354 (EISS) participates in ATP binding. L-serine is bound at residue Ser387.

This sequence belongs to the class-II aminoacyl-tRNA synthetase family. Type-1 seryl-tRNA synthetase subfamily. As to quaternary structure, homodimer. The tRNA molecule binds across the dimer.

The protein resides in the cytoplasm. The enzyme catalyses tRNA(Ser) + L-serine + ATP = L-seryl-tRNA(Ser) + AMP + diphosphate + H(+). The catalysed reaction is tRNA(Sec) + L-serine + ATP = L-seryl-tRNA(Sec) + AMP + diphosphate + H(+). It functions in the pathway aminoacyl-tRNA biosynthesis; selenocysteinyl-tRNA(Sec) biosynthesis; L-seryl-tRNA(Sec) from L-serine and tRNA(Sec): step 1/1. Functionally, catalyzes the attachment of serine to tRNA(Ser). Is also able to aminoacylate tRNA(Sec) with serine, to form the misacylated tRNA L-seryl-tRNA(Sec), which will be further converted into selenocysteinyl-tRNA(Sec). The polypeptide is Serine--tRNA ligase (Stutzerimonas stutzeri (strain A1501) (Pseudomonas stutzeri)).